Here is a 596-residue protein sequence, read N- to C-terminus: M-phase inducer phosphatase (596 aa).

Phosphoserine occurs at positions 99 and 178. Positions 174–221 (LSSSSFDSYLRPNVSRSRSSGNAPPFLRSRSSSSYSINKKKGTSGGQA) are disordered. The region spanning 429-533 (IFDKCIIIDC…FYENHKNRCD (105 aa)) is the Rhodanese domain. The active-site Phosphocysteine intermediate is Cys-480.

This sequence belongs to the MPI phosphatase family. As to quaternary structure, interacts with rad24 during G2 in a srk1-dependent manner; the interaction is increased during osmostress. Post-translationally, phosphorylated by srk1 in the N-terminus; phosphorylation promotes nuclear exclusion.

The protein localises to the cytoplasm. It is found in the nucleus. The enzyme catalyses O-phospho-L-tyrosyl-[protein] + H2O = L-tyrosyl-[protein] + phosphate. In terms of biological role, tyrosine protein phosphatase which functions as a dosage-dependent inducer of mitotic and meiotic progression. Directly dephosphorylates cdc2 and stimulates its kinase activity. Required for the G2/M transition of the cell cycle. Required for induction of meiosis II. This is M-phase inducer phosphatase from Schizosaccharomyces pombe (strain 972 / ATCC 24843) (Fission yeast).